The chain runs to 313 residues: Small ribosomal subunit protein uS2 (313 aa).

Positions 234–243 are enriched in basic and acidic residues; the sequence is DEEAKEEKTK. The tract at residues 234–313 is disordered; the sequence is DEEAKEEKTK…ASKAEAEEGK (80 aa). Residues 244-256 are compositionally biased toward basic residues; that stretch reads AKTTAKKVVTKKA. Positions 266 to 297 are enriched in basic and acidic residues; sequence AEKKSEKPTTEKRPTKEAAETKETSEEPKTKE.

The protein belongs to the universal ribosomal protein uS2 family.

This chain is Small ribosomal subunit protein uS2, found in Coxiella burnetii (strain Dugway 5J108-111).